The sequence spans 243 residues: HTH-type transcriptional regulator MlrA (243 aa).

The region spanning 3–72 (LYTIGEVALL…VSKVKMLLSN (70 aa)) is the HTH merR-type domain. The H-T-H motif DNA-binding region spans 6–25 (IGEVALLCDINPVTLRAWQR).

As to quaternary structure, interacts with DgcM and PdeR.

With respect to regulation, activity is regulated by DgcM and PdeR. Functionally, activates transcription of csgD, the master regulator of biofilm formation, by binding to its promoter region. Also controls the transcription of cadC and ibaG. Part of a signaling cascade that regulates curli biosynthesis. The cascade is composed of two c-di-GMP control modules, in which c-di-GMP controlled by the DgcE/PdeH pair (module I) regulates the activity of the DgcM/PdeR pair (module II), which in turn regulates activity of the transcription factor MlrA. The chain is HTH-type transcriptional regulator MlrA from Escherichia coli (strain K12).